We begin with the raw amino-acid sequence, 256 residues long: Imidazole glycerol phosphate synthase subunit HisF (256 aa).

Catalysis depends on residues aspartate 11 and aspartate 130.

This sequence belongs to the HisA/HisF family. In terms of assembly, heterodimer of HisH and HisF.

It localises to the cytoplasm. The catalysed reaction is 5-[(5-phospho-1-deoxy-D-ribulos-1-ylimino)methylamino]-1-(5-phospho-beta-D-ribosyl)imidazole-4-carboxamide + L-glutamine = D-erythro-1-(imidazol-4-yl)glycerol 3-phosphate + 5-amino-1-(5-phospho-beta-D-ribosyl)imidazole-4-carboxamide + L-glutamate + H(+). It functions in the pathway amino-acid biosynthesis; L-histidine biosynthesis; L-histidine from 5-phospho-alpha-D-ribose 1-diphosphate: step 5/9. Functionally, IGPS catalyzes the conversion of PRFAR and glutamine to IGP, AICAR and glutamate. The HisF subunit catalyzes the cyclization activity that produces IGP and AICAR from PRFAR using the ammonia provided by the HisH subunit. This is Imidazole glycerol phosphate synthase subunit HisF from Prochlorococcus marinus (strain MIT 9312).